Consider the following 2049-residue polypeptide: Nonribosomal peptide synthetase tcpP (2049 aa).

Positions 13 to 395 (RHHAEAHPEA…LGRKDQLIKN (383 aa)) are adenylation 1. Residues 497-573 (ATADTKLSAL…EISNHIIEFD (77 aa)) enclose the Carrier 1 domain. O-(pantetheine 4'-phosphoryl)serine is present on serine 534. The condensation 1 stretch occupies residues 605 to 913 (REITMTDVQR…ALGSKMDLLS (309 aa)). Residues 1071–1452 (VAAWPMSVAL…GRADHQVKVR (382 aa)) form an adenylation 2 region. The 76-residue stretch at 1550–1625 (DHTELVVSQV…SLAASVKKHL (76 aa)) folds into the Carrier 2 domain. Residue serine 1585 is modified to O-(pantetheine 4'-phosphoryl)serine. Residues 1662 to 2044 (MHKQASNPSS…FEQEICNLLD (383 aa)) form a condensation 2 region.

The protein belongs to the NRP synthetase family.

It participates in secondary metabolite biosynthesis. Nonribosomal peptide synthetase; part of the gene cluster that mediates the biosynthesis of an unusual class of epipolythiodioxopiperazines (ETPs) lacking the reactive thiol group important for toxicity. Firstly, L-tyrosine is prenylated by tcpD, before undergoing condensation with L-glycine in a reaction catalyzed by the NRPS tcpP leading to the diketopiperazine (DKP) backbone. Afterwards the alpha-carbon of tyrosine is oxidized by the cytochrome P450 tcpC to form a hydroxyl group. However, in contrast other ETP biosynthesis pathways studied so far, tcpC is not able to bishydroxylate the DKP at both alpha-carbon positions, but hydroxylates the alpha-carbon of the tyrosine part and the nitrogen of the glycine part. The next steps involve an alpha,beta-elimination reaction catalyzed by tcpI, a methylation by the methyltransferase tcpN the action of the four enzyme cascade tcpG/K/J/I. Due to a dysfunctional cytochrome P450 monooxygenase tcpC, the pathway leads to the biosynthesis of probable non-toxic metabolites lacking the reactive thiol group. The protein is Nonribosomal peptide synthetase tcpP of Claviceps purpurea (strain 20.1) (Ergot fungus).